The sequence spans 191 residues: GTP-binding protein CIN4 (191 aa).

Residues 23-30 (GLDNSGKS), 69-73 (DIGGQ), and 131-134 (NKID) contribute to the GTP site.

Functionally, implicated in yeast microtubule function. This Saccharomyces cerevisiae (strain ATCC 204508 / S288c) (Baker's yeast) protein is GTP-binding protein CIN4 (CIN4).